The chain runs to 227 residues: Lipoprotein-releasing system ATP-binding protein LolD (227 aa).

Residues L7–A227 enclose the ABC transporter domain. ATP is bound at residue G43–S50.

Belongs to the ABC transporter superfamily. Lipoprotein translocase (TC 3.A.1.125) family. As to quaternary structure, the complex is composed of two ATP-binding proteins (LolD) and two transmembrane proteins (LolC and LolE).

The protein localises to the cell inner membrane. In terms of biological role, part of the ABC transporter complex LolCDE involved in the translocation of mature outer membrane-directed lipoproteins, from the inner membrane to the periplasmic chaperone, LolA. Responsible for the formation of the LolA-lipoprotein complex in an ATP-dependent manner. This Pseudomonas syringae pv. tomato (strain ATCC BAA-871 / DC3000) protein is Lipoprotein-releasing system ATP-binding protein LolD.